The sequence spans 513 residues: ATP synthase subunit alpha (513 aa).

Position 169-176 (169-176) interacts with ATP; the sequence is GDRQIGKT.

Belongs to the ATPase alpha/beta chains family. As to quaternary structure, F-type ATPases have 2 components, CF(1) - the catalytic core - and CF(0) - the membrane proton channel. CF(1) has five subunits: alpha(3), beta(3), gamma(1), delta(1), epsilon(1). CF(0) has three main subunits: a(1), b(2) and c(9-12). The alpha and beta chains form an alternating ring which encloses part of the gamma chain. CF(1) is attached to CF(0) by a central stalk formed by the gamma and epsilon chains, while a peripheral stalk is formed by the delta and b chains.

Its subcellular location is the cell inner membrane. The catalysed reaction is ATP + H2O + 4 H(+)(in) = ADP + phosphate + 5 H(+)(out). Its function is as follows. Produces ATP from ADP in the presence of a proton gradient across the membrane. The alpha chain is a regulatory subunit. The polypeptide is ATP synthase subunit alpha (Francisella tularensis subsp. novicida (strain U112)).